The sequence spans 466 residues: Uronate isomerase (466 aa).

The protein belongs to the metallo-dependent hydrolases superfamily. Uronate isomerase family.

It carries out the reaction D-glucuronate = D-fructuronate. The catalysed reaction is aldehydo-D-galacturonate = keto-D-tagaturonate. The protein operates within carbohydrate metabolism; pentose and glucuronate interconversion. The chain is Uronate isomerase (uxaC) from Brucella melitensis biotype 1 (strain ATCC 23456 / CCUG 17765 / NCTC 10094 / 16M).